A 271-amino-acid polypeptide reads, in one-letter code: Cytosolic Fe-S cluster assembly factor NUBP2 (271 aa).

Met1 is modified (N-acetylmethionine). 22–29 (GKGGVGKS) contacts ATP. The [4Fe-4S] cluster site is built by Cys196 and Cys199.

It belongs to the Mrp/NBP35 ATP-binding proteins family. NUBP2/CFD1 subfamily. In terms of assembly, heterotetramer of 2 NUBP1 and 2 NUBP2 chains. Interacts with KIFC1. Interacts with NUBP1. It depends on [4Fe-4S] cluster as a cofactor.

The protein resides in the nucleus. It localises to the cytoplasm. It is found in the cytoskeleton. The protein localises to the microtubule organizing center. Its subcellular location is the centrosome. The protein resides in the cilium axoneme. It localises to the centriole. In terms of biological role, component of the cytosolic iron-sulfur (Fe/S) protein assembly (CIA) machinery. Required for maturation of extramitochondrial Fe-S proteins. The NUBP1-NUBP2 heterotetramer forms a Fe-S scaffold complex, mediating the de novo assembly of an Fe-S cluster and its transfer to target apoproteins. Negatively regulates cilium formation and structure. This is Cytosolic Fe-S cluster assembly factor NUBP2 from Bos taurus (Bovine).